We begin with the raw amino-acid sequence, 263 residues long: Aquaporin Lacbi1:247946 (263 aa).

Over 1 to 18 (MKLTISHHKCAIRKVMAE) the chain is Cytoplasmic. A helical transmembrane segment spans residues 19-39 (FVGVALLVIFGAGTACQVVLS). Residues 40–45 (TNPSSF) lie on the Extracellular side of the membrane. Residues 46 to 66 (LSINFGWAIGIATGAWVSAGI) form a helical membrane-spanning segment. The Cytoplasmic segment spans residues 67–89 (SGGHINPAITIAMATYRGFPWRE). Residues 72 to 74 (NPA) carry the NPA 1 motif. The helical transmembrane segment at 90 to 110 (VPGYIFAQALGGFVGAALVYA) threads the bilayer. The Extracellular portion of the chain corresponds to 111 to 143 (NYFHAIDIFEGGHIRTQATASLFATFALPYMTQ). The helical transmembrane segment at 144-164 (ASCFFSEFLATAVLFIVFLAL) threads the bilayer. Over 165-169 (NDKHN) the chain is Cytoplasmic. A helical transmembrane segment spans residues 170-190 (GALTNGLLPFALFILFIGLGA). Over 191-227 (SLGMQTGYAVNPARDFGPRLFLAMAGYGKAVFNYRRQ) the chain is Extracellular. Positions 201–203 (NPA) match the NPA 2 motif. The helical transmembrane segment at 228-248 (YWIWAPIIAPILGAQAGGLLY) threads the bilayer. Residues 249 to 263 (DTSIYNGDDSPIKWR) are Cytoplasmic-facing.

Belongs to the MIP/aquaporin (TC 1.A.8) family.

The protein localises to the membrane. It catalyses the reaction H2O(in) = H2O(out). In terms of biological role, water channel required to facilitate the transport of water across membranes. Shows low but significant water conductivity, but no glycerol nor ammonium transport activities. In Laccaria bicolor (strain S238N-H82 / ATCC MYA-4686) (Bicoloured deceiver), this protein is Aquaporin Lacbi1:247946.